A 544-amino-acid polypeptide reads, in one-letter code: Lysophosphatidylcholine acyltransferase 2 (544 aa).

At 1 to 57 the chain is on the cytoplasmic side; that stretch reads MSRCAQAAEVAATVPGAGVGNVGLRPPMVPRQASFFPPPVPNPFVQQTQIGSARRVQ. Residues 58-78 traverse the membrane as a helical; Signal-anchor for type II membrane protein segment; sequence IVLLGIILLPIRVLLVALILL. Topologically, residues 79-544 are lumenal; that stretch reads LAWPFAAIST…EESTSDKKDD (466 aa). Residues 146–151 carry the HXXXXD motif motif; sequence HSTFFD. Residues 220–223 carry the EGTC motif motif; it reads EGTC. EF-hand domains are found at residues 391-426 and 428-463; these read PVSD…LCNP and NTEE…SLGV. 10 residues coordinate Ca(2+): Asp-404, Asn-406, Asp-408, Ser-410, Glu-415, Asp-441, Asp-443, Asp-445, Tyr-447, and Glu-452. Residues 518–529 show a composition bias toward polar residues; sequence VQTTPSTASNKV. Residues 518–544 form a disordered region; the sequence is VQTTPSTASNKVSPEKHEESTSDKKDD. Positions 530 to 544 are enriched in basic and acidic residues; it reads SPEKHEESTSDKKDD.

Belongs to the 1-acyl-sn-glycerol-3-phosphate acyltransferase family.

The protein resides in the endoplasmic reticulum membrane. Its subcellular location is the golgi apparatus membrane. It is found in the cell membrane. It localises to the lipid droplet. It catalyses the reaction a 1-acyl-sn-glycero-3-phosphocholine + an acyl-CoA = a 1,2-diacyl-sn-glycero-3-phosphocholine + CoA. The enzyme catalyses a 1-O-alkyl-sn-glycero-3-phosphocholine + acetyl-CoA = a 1-O-alkyl-2-acetyl-sn-glycero-3-phosphocholine + CoA. It carries out the reaction a 1-acyl-sn-glycero-3-phosphate + an acyl-CoA = a 1,2-diacyl-sn-glycero-3-phosphate + CoA. The catalysed reaction is a 1-O-(1Z-alkenyl)-sn-glycero-3-phosphocholine + an acyl-CoA = a 1-O-(1Z-alkenyl)-2-acyl-sn-glycero-3-phosphocholine + CoA. It catalyses the reaction 1-hexadecanoyl-sn-glycero-3-phosphate + (9Z)-octadecenoyl-CoA = 1-hexadecanoyl-2-(9Z-octadecenoyl)-sn-glycero-3-phosphate + CoA. The enzyme catalyses 1-(9Z-octadecenoyl)-sn-glycero-3-phosphate + (9Z)-octadecenoyl-CoA = 1,2-di-(9Z-octadecenoyl)-sn-glycero-3-phosphate + CoA. It carries out the reaction 1-(9Z-octadecenoyl)-sn-glycero-3-phosphate + hexadecanoyl-CoA = 1-(9Z)-octadecenoyl-2-hexadecanoyl-sn-glycero-3-phosphate + CoA. The catalysed reaction is 1-heptadecanoyl-sn-glycero-3-phosphate + (9Z)-octadecenoyl-CoA = 1-heptadecanoyl-2-(9Z)-octadecenoyl-sn-glycero-3-phosphate + CoA. It catalyses the reaction 1-octadecanoyl-sn-glycero-3-phosphate + (9Z)-octadecenoyl-CoA = 1-octadecanoyl-2-(9Z-octadecenoyl)-sn-glycero-3-phosphate + CoA. The enzyme catalyses heptadecanoyl-CoA + 1-(9Z-octadecenoyl)-sn-glycero-3-phosphate = 1-(9Z)-octadecenoyl-2-heptadecanoyl-sn-glycero-3-phosphate + CoA. It carries out the reaction 1-(9Z-octadecenoyl)-sn-glycero-3-phosphate + (9Z,12Z)-octadecadienoyl-CoA = 1-(9Z)-octadecenoyl-2-(9Z,12Z)-octadecadienoyl-sn-glycero-3-phosphate + CoA. The catalysed reaction is 1-(9Z-octadecenoyl)-sn-glycero-3-phosphate + tetradecanoyl-CoA = 1-(9Z)-octadecenoyl-2-tetradecanoyl-sn-glycero-3-phosphate + CoA. It catalyses the reaction pentadecanoyl-CoA + 1-(9Z-octadecenoyl)-sn-glycero-3-phosphate = 1-(9Z)-octadecenoyl-2-pentadecanoyl-sn-glycero-3-phosphate + CoA. The enzyme catalyses nonadecanoyl-CoA + 1-(9Z-octadecenoyl)-sn-glycero-3-phosphate = 1-(9Z)-octadecenoyl-2-nonadecanoyl-sn-glycero-3-phosphate + CoA. It carries out the reaction 1-hexadecanoyl-sn-glycero-3-phosphocholine + (9Z)-octadecenoyl-CoA = 1-hexadecanoyl-2-(9Z-octadecenoyl)-sn-glycero-3-phosphocholine + CoA. The catalysed reaction is 1-O-hexadecyl-sn-glycero-3-phosphocholine + acetyl-CoA = 1-O-hexadecyl-2-acetyl-sn-glycero-3-phosphocholine + CoA. It catalyses the reaction 1-O-octadecyl-sn-glycero-3-phosphocholine + acetyl-CoA = 1-O-octadecyl-2-acetyl-sn-glycero-3-phosphocholine + CoA. The enzyme catalyses 1-hexadecanoyl-sn-glycero-3-phosphocholine + acetyl-CoA = 1-hexadecanoyl-2-acetyl-sn-glycero-3-phosphocholine + CoA. It carries out the reaction 1-octadecanoyl-sn-glycero-3-phosphocholine + acetyl-CoA = 1-octadecanoyl-2-acetyl-sn-glycero-3-phosphocholine + CoA. The catalysed reaction is a 1-O-(1Z-alkenyl)-sn-glycero-3-phosphocholine + acetyl-CoA = 1-O-(1Z)-alkenyl-2-acetyl-sn-glycero-3-phosphocholine + CoA. It catalyses the reaction 1-O-octadecyl-sn-glycero-3-phosphocholine + (5Z,8Z,11Z,14Z)-eicosatetraenoyl-CoA = 1-O-octadecyl-2-(5Z,8Z,11Z,14Z)-eicosatetraenoyl-sn-glycero-3-phosphocholine + CoA. It functions in the pathway lipid metabolism; phospholipid metabolism. Its function is as follows. Exhibits both acyltransferase and acetyltransferase activities. Catalyzes the conversion of lysophosphatidylcholine (1-acyl-sn-glycero-3-phosphocholine or LPC) into phosphatidylcholine (1,2-diacyl-sn-glycero-3-phosphocholine or PC). Catalyzes the conversion 1-acyl-sn-glycerol-3-phosphate (lysophosphatidic acid or LPA) into 1,2-diacyl-sn-glycerol-3-phosphate (phosphatidic acid or PA) by incorporating an acyl moiety at the sn-2 position of the glycerol backbone. Involved in platelet-activating factor (PAF) biosynthesis by catalyzing the conversion of the PAF precursor, 1-O-alkyl-sn-glycero-3-phosphocholine (lyso-PAF) into 1-O-alkyl-2-acetyl-sn-glycero-3-phosphocholine (PAF). Also converts lyso-PAF to 1-O-alkyl-2-acyl-sn-glycero-3-phosphocholine (PC), a major component of cell membranes and a PAF precursor. Under resting conditions, acyltransferase activity is preferred. Upon acute inflammatory stimulus, acetyltransferase activity is enhanced and PAF synthesis increases. Involved in the regulation of lipid droplet number and size. The protein is Lysophosphatidylcholine acyltransferase 2 (LPCAT2) of Homo sapiens (Human).